The following is a 62-amino-acid chain: UPF0339 protein Atu0232 (62 aa).

Belongs to the UPF0339 family.

The polypeptide is UPF0339 protein Atu0232 (Agrobacterium fabrum (strain C58 / ATCC 33970) (Agrobacterium tumefaciens (strain C58))).